The sequence spans 461 residues: Cysteine--tRNA ligase (461 aa).

Residue Cys-28 participates in Zn(2+) binding. A 'HIGH' region motif is present at residues 30–40 (ITVYDLCHIGH). Zn(2+) contacts are provided by Cys-209, His-234, and Glu-238. Positions 266 to 270 (KMSKS) match the 'KMSKS' region motif. Lys-269 lines the ATP pocket.

It belongs to the class-I aminoacyl-tRNA synthetase family. As to quaternary structure, monomer. Requires Zn(2+) as cofactor.

It is found in the cytoplasm. It catalyses the reaction tRNA(Cys) + L-cysteine + ATP = L-cysteinyl-tRNA(Cys) + AMP + diphosphate. The protein is Cysteine--tRNA ligase of Cronobacter sakazakii (strain ATCC BAA-894) (Enterobacter sakazakii).